The primary structure comprises 116 residues: Class I hydrophobin 1 (116 aa).

The N-terminal stretch at 1–19 (MLFKQAILVATTLTDLAVA) is a signal peptide. Intrachain disulfides connect Cys35/Cys95, Cys42/Cys89, Cys43/Cys76, and Cys96/Cys109. 2 N-linked (GlcNAc...) asparagine glycosylation sites follow: Asn44 and Asn100.

This sequence belongs to the fungal hydrophobin family. As to quaternary structure, self-assembles to form functional amyloid fibrils called rodlets. Self-assembly into fibrillar rodlets occurs spontaneously at hydrophobic:hydrophilic interfaces and the rodlets further associate laterally to form amphipathic monolayers.

It is found in the secreted. It localises to the cell wall. In terms of biological role, aerial growth, conidiation, and dispersal of filamentous fungi in the environment rely upon a capability of their secreting small amphipathic proteins called hydrophobins (HPBs) with low sequence identity. Class I can self-assemble into an outermost layer of rodlet bundles on aerial cell surfaces, conferring cellular hydrophobicity that supports fungal growth, development and dispersal; whereas Class II form highly ordered films at water-air interfaces through intermolecular interactions but contribute nothing to the rodlet structure. This Pleurotus ostreatus (Oyster mushroom) protein is Class I hydrophobin 1.